We begin with the raw amino-acid sequence, 277 residues long: Urease accessory protein UreD (277 aa).

Belongs to the UreD family. In terms of assembly, ureD, UreF and UreG form a complex that acts as a GTP-hydrolysis-dependent molecular chaperone, activating the urease apoprotein by helping to assemble the nickel containing metallocenter of UreC. The UreE protein probably delivers the nickel.

Its subcellular location is the cytoplasm. Required for maturation of urease via the functional incorporation of the urease nickel metallocenter. The chain is Urease accessory protein UreD from Yersinia pestis (strain Pestoides F).